The primary structure comprises 640 residues: LRR receptor kinase SERL2 (640 aa).

Positions 1–22 (MEPPFFLLLLLLVVSSSSPSAA) are cleaved as a signal peptide. Over 23 to 241 (LLSAKGVNNE…AARDRGHKFA (219 aa)) the chain is Extracellular. 2 N-linked (GlcNAc...) asparagine glycosylation sites follow: Asn94 and Asn107. LRR repeat units lie at residues 95-119 (LTNL…IGRL), 120-143 (ENLK…VGHL), 145-167 (SLQY…SANL), and 168-191 (SHLV…LART). Asn153, Asn166, Asn179, and Asn222 each carry an N-linked (GlcNAc...) asparagine glycan. Residues 242–262 (VAFGSTAGCMGLLLLAAGFLF) form a helical membrane-spanning segment. The Cytoplasmic portion of the chain corresponds to 263–640 (WWRHRRNRQI…VQAVELSGPR (378 aa)). The region spanning 304–583 (FSGKNILGKG…EGDGLADRWE (280 aa)) is the Protein kinase domain. ATP-binding positions include 310–318 (LGKGGFGNV) and Lys332. The Proton acceptor role is filled by Asp427.

Belongs to the protein kinase superfamily. Ser/Thr protein kinase family. In terms of assembly, interacts with MSBP1.

The protein localises to the cell membrane. It catalyses the reaction L-seryl-[protein] + ATP = O-phospho-L-seryl-[protein] + ADP + H(+). The enzyme catalyses L-threonyl-[protein] + ATP = O-phospho-L-threonyl-[protein] + ADP + H(+). LRR receptor kinase that may be involved in defense response. This is LRR receptor kinase SERL2 from Oryza sativa subsp. japonica (Rice).